We begin with the raw amino-acid sequence, 193 residues long: dCTP deaminase (193 aa).

DCTP contacts are provided by residues 110–115, aspartate 128, 136–138, tyrosine 171, lysine 178, and glutamine 182; these read RSSLAR and VLE. Glutamate 138 acts as the Proton donor/acceptor in catalysis. The segment at 169-193 is disordered; sequence RPYNRRQDAKYRDQQGAVASRIDKD.

The protein belongs to the dCTP deaminase family. In terms of assembly, homotrimer.

It carries out the reaction dCTP + H2O + H(+) = dUTP + NH4(+). Its pathway is pyrimidine metabolism; dUMP biosynthesis; dUMP from dCTP (dUTP route): step 1/2. In terms of biological role, catalyzes the deamination of dCTP to dUTP. The chain is dCTP deaminase from Salmonella arizonae (strain ATCC BAA-731 / CDC346-86 / RSK2980).